Reading from the N-terminus, the 514-residue chain is Contact site A protein (514 aa).

Positions M1–S19 are cleaved as a signal peptide. A globular region spans residues A20 to I453. Residues P21–T104 enclose the IPT/TIG 1 domain. Residues N128, N137, N207, N294, and N399 are each glycosylated (N-linked (GlcNAc...) asparagine). One can recognise an IPT/TIG 2 domain in the interval P191–N283. Composition is skewed to low complexity over residues T446–P475 and S483–A494. A disordered region spans residues T446–A494. 2 consecutive repeat copies span residues T462–P469 and T472–P479. Residues T462–P479 are 2 X 8 AA repeats, Pro-rich. The GPI-like-anchor amidated serine moiety is linked to residue S492. A propeptide spans S493–I514 (removed in mature form).

Phosphorylated on serine and N-glycosylated with two types of oligosaccharide chains. In terms of processing, the GPI-like-anchor contains a phosphoceramide group, rather than a phosphatidyl group.

The protein resides in the cell membrane. This cell-surface glycoprotein mediates cell-cell binding via homophilic interaction. This chain is Contact site A protein (csaA), found in Dictyostelium discoideum (Social amoeba).